A 531-amino-acid chain; its full sequence is Poly(A)-specific ribonuclease PNLDC1 (531 aa).

4 residues coordinate Mg(2+): aspartate 28, glutamate 30, aspartate 271, and aspartate 365. Residues 506–526 traverse the membrane as a helical segment; sequence ITCLLQVCSIVTTWAMIAFLL.

Belongs to the CAF1 family. Mg(2+) is required as a cofactor. As to expression, specifically expressed in embryonic stem cells. Highly expressed in testis.

The protein localises to the endoplasmic reticulum membrane. It catalyses the reaction Exonucleolytic cleavage of poly(A) to 5'-AMP.. Its function is as follows. 3'-exoribonuclease that has a preference for poly(A) tails of mRNAs, thereby efficiently degrading poly(A) tails. Exonucleolytic degradation of the poly(A) tail is often the first step in the decay of eukaryotic mRNAs and is also used to silence certain maternal mRNAs translationally during oocyte maturation and early embryonic development. May act as a regulator of multipotency in embryonic stem cells. Is a critical factor for proper spermatogenesis, involved in pre-piRNAs processing to generate mature piRNAs. The sequence is that of Poly(A)-specific ribonuclease PNLDC1 from Mus musculus (Mouse).